We begin with the raw amino-acid sequence, 181 residues long: Cytidylate kinase (181 aa).

12–20 (GLAGSGTTT) is a binding site for ATP.

This sequence belongs to the cytidylate kinase family. Type 2 subfamily.

The protein localises to the cytoplasm. It catalyses the reaction CMP + ATP = CDP + ADP. The catalysed reaction is dCMP + ATP = dCDP + ADP. This Pyrococcus abyssi (strain GE5 / Orsay) protein is Cytidylate kinase (cmk).